The chain runs to 465 residues: Glutamate--tRNA ligase 2 (465 aa).

Positions 8 to 18 (PSPTGLMHLGN) match the 'HIGH' region motif. The 'KMSKS' region motif lies at 249–253 (PLSKR). K252 lines the ATP pocket.

The protein belongs to the class-I aminoacyl-tRNA synthetase family. Glutamate--tRNA ligase type 1 subfamily. Monomer.

It is found in the cytoplasm. It catalyses the reaction tRNA(Glu) + L-glutamate + ATP = L-glutamyl-tRNA(Glu) + AMP + diphosphate. Functionally, catalyzes the attachment of glutamate to tRNA(Glu) in a two-step reaction: glutamate is first activated by ATP to form Glu-AMP and then transferred to the acceptor end of tRNA(Glu). The chain is Glutamate--tRNA ligase 2 from Coxiella burnetii (strain RSA 331 / Henzerling II).